The sequence spans 149 residues: UPF0178 protein VF_0601 (149 aa).

It belongs to the UPF0178 family.

In Aliivibrio fischeri (strain ATCC 700601 / ES114) (Vibrio fischeri), this protein is UPF0178 protein VF_0601.